Reading from the N-terminus, the 302-residue chain is Deoxyhypusine hydroxylase (302 aa).

HEAT-like PBS-type repeat units follow at residues 23-49 (ERFR…AFDD), 54-80 (LKHE…VLKD), 87-113 (VRHE…YKQD), 175-201 (DRYR…GLKD), 206-232 (FRHE…NLED), and 239-265 (VRHE…YAED). Positions 56, 57, 89, and 90 each coordinate Fe cation. Positions 208, 209, 241, and 242 each coordinate Fe cation.

Belongs to the deoxyhypusine hydroxylase family. The cofactor is Fe(2+).

Its subcellular location is the endoplasmic reticulum membrane. The enzyme catalyses [eIF5A protein]-deoxyhypusine + AH2 + O2 = [eIF5A protein]-hypusine + A + H2O. It functions in the pathway protein modification; eIF5A hypusination. Functionally, catalyzes the hydroxylation of the N(6)-(4-aminobutyl)-L-lysine intermediate to form hypusine, an essential post-translational modification only found in mature eIF-5A factor. Essential for organismal viability and plays a role in a wide number of important processes such as cell growth and proliferation, and regulates induction of autophagy and protein synthesis. Has a role in eIF-5A-mediated translational control. In Drosophila melanogaster (Fruit fly), this protein is Deoxyhypusine hydroxylase.